The sequence spans 100 residues: Apolipoprotein C-II (100 aa).

The N-terminal stretch at 1–22 (MDSRFLLALFLVLLVLGCEVQA) is a signal peptide. Residues 66–74 (SVDEKLRDM) are lipid binding. The segment at 78–100 (SSAAMTTYAIIFTDQILTLLKGE) is lipoprotein lipase cofactor.

Belongs to the apolipoprotein C2 family. Proapolipoprotein C-II is synthesized as a sialic acid containing glycoprotein which is subsequently desialylated prior to its proteolytic processing. Post-translationally, proapolipoprotein C-II, the major form found in plasma undergoes proteolytic cleavage of its N-terminal hexapeptide to generate the mature form apolipoprotein C-II, which occurs as the minor form in plasma.

Its subcellular location is the secreted. Its function is as follows. Component of chylomicrons, very low-density lipoproteins (VLDL), low-density lipoproteins (LDL), and high-density lipoproteins (HDL) in plasma. Plays an important role in lipoprotein metabolism as an activator of lipoprotein lipase. This is Apolipoprotein C-II (APOC2) from Myodes glareolus (Bank vole).